The sequence spans 343 residues: Probable F-box protein At1g67455 (343 aa).

Residues Met1–Phe46 form the F-box domain.

This Arabidopsis thaliana (Mouse-ear cress) protein is Probable F-box protein At1g67455.